The chain runs to 355 residues: MAEFVRAQIFGTTFEITSRYTDLQPVGMGAFGLVCSAKDQLTSQAVAIKKIMKPFSTPVLSKRTYRELKLLKHLRHENIISLSDIFISPLEDIYFVTELLGTDLHRLLTSRPLEKQFIQYFLYQILRGLKYVHSAGVVHRDLKPSNILVNENCDLKICDFGLARIQDPQMTGYVSTRYYRAPEIMLTWQKYDVEVDVWSAGCIFAEMLEGKPLFPGKDHVNQFSIITELLGTPPDDVIHTICSENTLRFVQSLPKRERQPLANKFKNAEPAAVDLLENMLVFDPKKRVRAEQALAHPYLAPYHDPTDEPVAEEKFDWSFNDADLPVDTWKIMMYSEILDYHNVDAAAQEGENGGS.

Residues 20–299 (YTDLQPVGMG…AEQALAHPYL (280 aa)) form the Protein kinase domain. Residues 26 to 34 (VGMGAFGLV) and lysine 49 each bind ATP. Aspartate 141 acts as the Proton acceptor in catalysis. Position 171 is a phosphothreonine (threonine 171). A TXY motif is present at residues 171–173 (TGY). Tyrosine 173 carries the phosphotyrosine modification.

It belongs to the protein kinase superfamily. Ser/Thr protein kinase family. MAP kinase subfamily. HOG1 sub-subfamily. Requires Mg(2+) as cofactor. Post-translationally, dually phosphorylated on Thr-171 and Tyr-173, which activates the enzyme.

It localises to the cytoplasm. The protein localises to the nucleus. The enzyme catalyses L-seryl-[protein] + ATP = O-phospho-L-seryl-[protein] + ADP + H(+). It carries out the reaction L-threonyl-[protein] + ATP = O-phospho-L-threonyl-[protein] + ADP + H(+). Its activity is regulated as follows. Activated by tyrosine and threonine phosphorylation. Proline-directed serine/threonine-protein kinase involved in a signal transduction pathway that is activated by changes in the osmolarity of the extracellular environment. Controls osmotic regulation of transcription of target genes. The protein is Mitogen-activated protein kinase HOG1 (HOG1) of Phaeosphaeria nodorum (strain SN15 / ATCC MYA-4574 / FGSC 10173) (Glume blotch fungus).